The sequence spans 1320 residues: Probable inactive ATP-dependent zinc metalloprotease FTSHI 5, chloroplastic (1320 aa).

The N-terminal 43 residues, Met-1–Arg-43, are a transit peptide targeting the chloroplast. A run of 3 helical transmembrane segments spans residues Leu-571–Met-591, Asn-633–Tyr-653, and Phe-695–Val-715. Gly-824–Thr-831 contacts ATP.

This sequence in the N-terminal section; belongs to the AAA ATPase family. It in the C-terminal section; belongs to the peptidase M41 family. Oligomer.

The protein resides in the plastid. The protein localises to the chloroplast membrane. Its function is as follows. Required for plastid development during embryogenesis. Might be involved in chaperone functions or play a structural role in the thylakoid FtsH complex. This is Probable inactive ATP-dependent zinc metalloprotease FTSHI 5, chloroplastic from Arabidopsis thaliana (Mouse-ear cress).